We begin with the raw amino-acid sequence, 332 residues long: Ketol-acid reductoisomerase (NADP(+)) (332 aa).

One can recognise a KARI N-terminal Rossmann domain in the interval 2–182; the sequence is AKIYHDLEVS…GATRAGVLET (181 aa). NADP(+) contacts are provided by residues 25–28, arginine 48, serine 53, and 83–86; these read YGSQ and DTEQ. Histidine 108 is an active-site residue. Glycine 134 contacts NADP(+). The 146-residue stretch at 183 to 328 folds into the KARI C-terminal knotted domain; the sequence is TFKEETETDL…KVIREMMPWL (146 aa). Residues aspartate 191, glutamate 195, glutamate 227, and glutamate 231 each contribute to the Mg(2+) site. Residue serine 252 participates in substrate binding.

Belongs to the ketol-acid reductoisomerase family. Mg(2+) serves as cofactor.

It catalyses the reaction (2R)-2,3-dihydroxy-3-methylbutanoate + NADP(+) = (2S)-2-acetolactate + NADPH + H(+). The enzyme catalyses (2R,3R)-2,3-dihydroxy-3-methylpentanoate + NADP(+) = (S)-2-ethyl-2-hydroxy-3-oxobutanoate + NADPH + H(+). The protein operates within amino-acid biosynthesis; L-isoleucine biosynthesis; L-isoleucine from 2-oxobutanoate: step 2/4. Its pathway is amino-acid biosynthesis; L-valine biosynthesis; L-valine from pyruvate: step 2/4. Its function is as follows. Involved in the biosynthesis of branched-chain amino acids (BCAA). Catalyzes an alkyl-migration followed by a ketol-acid reduction of (S)-2-acetolactate (S2AL) to yield (R)-2,3-dihydroxy-isovalerate. In the isomerase reaction, S2AL is rearranged via a Mg-dependent methyl migration to produce 3-hydroxy-3-methyl-2-ketobutyrate (HMKB). In the reductase reaction, this 2-ketoacid undergoes a metal-dependent reduction by NADPH to yield (R)-2,3-dihydroxy-isovalerate. In Dictyoglomus thermophilum (strain ATCC 35947 / DSM 3960 / H-6-12), this protein is Ketol-acid reductoisomerase (NADP(+)).